The primary structure comprises 69 residues: Cytochrome c oxidase subunit 8A, mitochondrial (69 aa).

The transit peptide at 1-25 (MYVVTPLLLRGLTGSARRLPVPRAQ) directs the protein to the mitochondrion. The SIFI-degron motif lies at 2–19 (YVVTPLLLRGLTGSARRL). At 26–36 (VHSMPPEQKLG) the chain is on the mitochondrial matrix side. Residues 37–60 (VLELAIGFTSCMVTFLLPAGWIMS) form a helical membrane-spanning segment. Over 61–69 (HLESYKKRG) the chain is Mitochondrial intermembrane.

The protein belongs to the cytochrome c oxidase VIII family. In terms of assembly, component of the cytochrome c oxidase (complex IV, CIV), a multisubunit enzyme composed of 14 subunits. The complex is composed of a catalytic core of 3 subunits MT-CO1, MT-CO2 and MT-CO3, encoded in the mitochondrial DNA, and 11 supernumerary subunits COX4I, COX5A, COX5B, COX6A, COX6B, COX6C, COX7A, COX7B, COX7C, COX8 and NDUFA4, which are encoded in the nuclear genome. The complex exists as a monomer or a dimer and forms supercomplexes (SCs) in the inner mitochondrial membrane with NADH-ubiquinone oxidoreductase (complex I, CI) and ubiquinol-cytochrome c oxidoreductase (cytochrome b-c1 complex, complex III, CIII), resulting in different assemblies (supercomplex SCI(1)III(2)IV(1) and megacomplex MCI(2)III(2)IV(2)). Post-translationally, in response to mitochondrial stress, the precursor protein is ubiquitinated by the SIFI complex in the cytoplasm before mitochondrial import, leading to its degradation. Within the SIFI complex, UBR4 initiates ubiquitin chain that are further elongated or branched by KCMF1.

The protein resides in the mitochondrion inner membrane. The protein operates within energy metabolism; oxidative phosphorylation. In terms of biological role, component of the cytochrome c oxidase, the last enzyme in the mitochondrial electron transport chain which drives oxidative phosphorylation. The respiratory chain contains 3 multisubunit complexes succinate dehydrogenase (complex II, CII), ubiquinol-cytochrome c oxidoreductase (cytochrome b-c1 complex, complex III, CIII) and cytochrome c oxidase (complex IV, CIV), that cooperate to transfer electrons derived from NADH and succinate to molecular oxygen, creating an electrochemical gradient over the inner membrane that drives transmembrane transport and the ATP synthase. Cytochrome c oxidase is the component of the respiratory chain that catalyzes the reduction of oxygen to water. Electrons originating from reduced cytochrome c in the intermembrane space (IMS) are transferred via the dinuclear copper A center (CU(A)) of subunit 2 and heme A of subunit 1 to the active site in subunit 1, a binuclear center (BNC) formed by heme A3 and copper B (CU(B)). The BNC reduces molecular oxygen to 2 water molecules using 4 electrons from cytochrome c in the IMS and 4 protons from the mitochondrial matrix. The chain is Cytochrome c oxidase subunit 8A, mitochondrial (COX8A) from Ateles belzebuth (White-bellied spider monkey).